Consider the following 284-residue polypeptide: Nucleotide-binding protein PP_0949 (284 aa).

8-15 contacts ATP; sequence GRSGSGKS. Residue 60–63 coordinates GTP; sequence DARN.

This sequence belongs to the RapZ-like family.

Functionally, displays ATPase and GTPase activities. The sequence is that of Nucleotide-binding protein PP_0949 from Pseudomonas putida (strain ATCC 47054 / DSM 6125 / CFBP 8728 / NCIMB 11950 / KT2440).